We begin with the raw amino-acid sequence, 312 residues long: Large ribosomal subunit protein uL10 (312 aa).

K14 participates in a covalent cross-link: Glycyl lysine isopeptide (Lys-Gly) (interchain with G-Cter in ubiquitin). S68 is subject to Phosphoserine. Glycyl lysine isopeptide (Lys-Gly) (interchain with G-Cter in ubiquitin) cross-links involve residues K97 and K144. Residues 199–230 (SSILDITDEELVSHFVSAVSTIASISLAIGYP) form an interaction with P1A-P2B region. The segment at 231–258 (TLPSVGHTLINNYKDLLAVAIAASYHYP) is interaction with P1B-P2A. Over residues 278-293 (PAATSAASGDAAPAEE) the composition is skewed to low complexity. The disordered stretch occupies residues 278–312 (PAATSAASGDAAPAEEAAAEEEEESDDDMGFGLFD). Residues 294–306 (AAAEEEEESDDDM) show a composition bias toward acidic residues. At S302 the chain carries Phosphoserine; by CK2.

This sequence belongs to the universal ribosomal protein uL10 family. Component of the large ribosomal subunit (LSU). Mature yeast ribosomes consist of a small (40S) and a large (60S) subunit. The 40S small subunit contains 1 molecule of ribosomal RNA (18S rRNA) and 33 different proteins (encoded by 57 genes). The large 60S subunit contains 3 rRNA molecules (25S, 5.8S and 5S rRNA) and 46 different proteins (encoded by 81 genes). The 5 acidic ribosomal P-proteins form the stalk structure of the 60S subunit. They are organized as a pentameric complex in which uL10/P0 interacts with 2 heterodimers, P1A-P2B and P1B-P2A. uL10 directly interacts with 28S rRNA. uL10 interacts with YFL034W.

It is found in the cytoplasm. Component of the ribosome, a large ribonucleoprotein complex responsible for the synthesis of proteins in the cell. The small ribosomal subunit (SSU) binds messenger RNAs (mRNAs) and translates the encoded message by selecting cognate aminoacyl-transfer RNA (tRNA) molecules. The large subunit (LSU) contains the ribosomal catalytic site termed the peptidyl transferase center (PTC), which catalyzes the formation of peptide bonds, thereby polymerizing the amino acids delivered by tRNAs into a polypeptide chain. The nascent polypeptides leave the ribosome through a tunnel in the LSU and interact with protein factors that function in enzymatic processing, targeting, and the membrane insertion of nascent chains at the exit of the ribosomal tunnel. uL10 forms part of the P stalk that participates in recruiting G proteins to the ribosome. The chain is Large ribosomal subunit protein uL10 from Saccharomyces cerevisiae (strain ATCC 204508 / S288c) (Baker's yeast).